The chain runs to 63 residues: Large ribosomal subunit protein uL29 (63 aa).

The protein belongs to the universal ribosomal protein uL29 family.

In Shewanella denitrificans (strain OS217 / ATCC BAA-1090 / DSM 15013), this protein is Large ribosomal subunit protein uL29.